The chain runs to 388 residues: Formate-dependent phosphoribosylglycinamide formyltransferase (388 aa).

Residues 15–16 (EL) and Glu-75 each bind N(1)-(5-phospho-beta-D-ribosyl)glycinamide. ATP is bound by residues Arg-107, Lys-148, 153–158 (SSGKGQ), 188–191 (EEFL), and Glu-196. One can recognise an ATP-grasp domain in the interval 112-302 (DLASAELALL…EFELHLRAVL (191 aa)). Glu-261 and Glu-273 together coordinate Mg(2+). Residues Asp-280, Lys-350, and 357 to 358 (RR) each bind N(1)-(5-phospho-beta-D-ribosyl)glycinamide.

Belongs to the PurK/PurT family. Homodimer.

The enzyme catalyses N(1)-(5-phospho-beta-D-ribosyl)glycinamide + formate + ATP = N(2)-formyl-N(1)-(5-phospho-beta-D-ribosyl)glycinamide + ADP + phosphate + H(+). The protein operates within purine metabolism; IMP biosynthesis via de novo pathway; N(2)-formyl-N(1)-(5-phospho-D-ribosyl)glycinamide from N(1)-(5-phospho-D-ribosyl)glycinamide (formate route): step 1/1. Involved in the de novo purine biosynthesis. Catalyzes the transfer of formate to 5-phospho-ribosyl-glycinamide (GAR), producing 5-phospho-ribosyl-N-formylglycinamide (FGAR). Formate is provided by PurU via hydrolysis of 10-formyl-tetrahydrofolate. This is Formate-dependent phosphoribosylglycinamide formyltransferase from Prochlorococcus marinus (strain MIT 9313).